The primary structure comprises 115 residues: MSNSQVIEKLLAKAKRTDLPSFAPGDTVRVHVKIKEGDKERLQAFEGVVIGKSNGLQPSFTVRKISFGQGVERIFPTNSKVIDKIEVLRSAKVRRAKLYYLRALRGKAARLKEAE.

It belongs to the bacterial ribosomal protein bL19 family.

In terms of biological role, this protein is located at the 30S-50S ribosomal subunit interface and may play a role in the structure and function of the aminoacyl-tRNA binding site. The sequence is that of Large ribosomal subunit protein bL19 from Koribacter versatilis (strain Ellin345).